We begin with the raw amino-acid sequence, 451 residues long: Penicillin-binding protein 4* (451 aa).

S61 (acyl-ester intermediate) is an active-site residue.

The protein belongs to the beta-lactamase family.

The protein resides in the forespore outer membrane. Its pathway is cell wall biogenesis; peptidoglycan biosynthesis. In terms of biological role, probably involved in peptidoglycan modification during cortex synthesis. The polypeptide is Penicillin-binding protein 4* (pbpE) (Bacillus subtilis (strain 168)).